The sequence spans 544 residues: MARFIFITGGVVSSLGKGLMAASLAALLQERGFRVRIRKFDPYLNVDPGTMSPYQHGEVYVTDDGAETDLDLGHYERFSGVPSRRSDNITSGRIYQNIIAKERRGDYLGATVQVIPHVTDAIKDFARDDTDDLDFVLCEIGGTVGDIESLPFIEAIRQLKNDLGRGNVVFVHLTLVPYIAAAGELKTKPTQHSVRDLTSFGIQPDVLVCRTEHPLPDSERSKIALFCNVPKEAVIPALDAKSIYDVPLHYHAEGLDKAVLSAFGLNIETPLDLHRWKEISDRLANPEGEVTIGVVGKYVGLQDAYKSLHEALVHGGIANRVKVNIVWLDAEMFEGNNPEAAEALSSLHAILVPGGFGERGSEGKIAAVKFAREHKVPFFGICLGMQMACIEGARNTAGLKKASSSEFGPSEEPVIGLITEWERDGEREERAADGDLGGTMRLGAYPAVLKAGSQVAEIYNSREITERHRHRYEVNIHYKEPLEKGGLVFSGMSPDGLLPEIVERPDHPWFIGVQFHPELKSKPFDPHPLFSDFVAAALKQSRLV.

Positions 1 to 265 are amidoligase domain; it reads MARFIFITGG…DKAVLSAFGL (265 aa). Ser13 is a CTP binding site. Ser13 is a binding site for UTP. 14–19 serves as a coordination point for ATP; sequence SLGKGL. Tyr54 serves as a coordination point for L-glutamine. Residue Asp71 coordinates ATP. Asp71 and Glu139 together coordinate Mg(2+). CTP-binding positions include 146–148, 186–191, and Lys222; these read DIE and KTKPTQ. UTP contacts are provided by residues 186-191 and Lys222; that span reads KTKPTQ. The Glutamine amidotransferase type-1 domain occupies 291 to 543; it reads TIGVVGKYVG…VAAALKQSRL (253 aa). Gly355 contacts L-glutamine. The active-site Nucleophile; for glutamine hydrolysis is Cys382. Residues 383-386, Glu406, and Arg471 each bind L-glutamine; that span reads LGMQ. Residues His516 and Glu518 contribute to the active site.

It belongs to the CTP synthase family. As to quaternary structure, homotetramer.

The catalysed reaction is UTP + L-glutamine + ATP + H2O = CTP + L-glutamate + ADP + phosphate + 2 H(+). The enzyme catalyses L-glutamine + H2O = L-glutamate + NH4(+). It carries out the reaction UTP + NH4(+) + ATP = CTP + ADP + phosphate + 2 H(+). Its pathway is pyrimidine metabolism; CTP biosynthesis via de novo pathway; CTP from UDP: step 2/2. Its activity is regulated as follows. Allosterically activated by GTP, when glutamine is the substrate; GTP has no effect on the reaction when ammonia is the substrate. The allosteric effector GTP functions by stabilizing the protein conformation that binds the tetrahedral intermediate(s) formed during glutamine hydrolysis. Inhibited by the product CTP, via allosteric rather than competitive inhibition. In terms of biological role, catalyzes the ATP-dependent amination of UTP to CTP with either L-glutamine or ammonia as the source of nitrogen. Regulates intracellular CTP levels through interactions with the four ribonucleotide triphosphates. The polypeptide is CTP synthase (Zymomonas mobilis subsp. mobilis (strain ATCC 31821 / ZM4 / CP4)).